The following is a 720-amino-acid chain: Biotin biosynthesis bifunctional protein BioWF (720 aa).

Residues 1-39 form a disordered region; it reads MRFSIKMRASARVSSSPSTSDGSSGDHTESRDRADRHIS. Low complexity predominate over residues 8–23; sequence RASARVSSSPSTSDGS. A compositionally biased stretch (basic and acidic residues) spans 24-39; the sequence is SGDHTESRDRADRHIS. R314 is a binding site for substrate. 401 to 402 contacts pyridoxal 5'-phosphate; the sequence is GY. H439 is a binding site for substrate. Pyridoxal 5'-phosphate-binding positions include S488, 513–516, and 564–567; these read DDAH and TASK. N6-(pyridoxal phosphate)lysine is present on K567. T684 is a substrate binding site.

It in the N-terminal section; belongs to the BioW family. The protein in the C-terminal section; belongs to the class-II pyridoxal-phosphate-dependent aminotransferase family. BioF subfamily. As to quaternary structure, homodimer. Mg(2+) serves as cofactor. Pyridoxal 5'-phosphate is required as a cofactor.

It carries out the reaction heptanedioate + ATP + CoA = 6-carboxyhexanoyl-CoA + AMP + diphosphate. It catalyses the reaction 6-carboxyhexanoyl-[ACP] + L-alanine + H(+) = (8S)-8-amino-7-oxononanoate + holo-[ACP] + CO2. Its pathway is metabolic intermediate metabolism; pimeloyl-CoA biosynthesis; pimeloyl-CoA from pimelate: step 1/1. It functions in the pathway cofactor biosynthesis; biotin biosynthesis. Catalyzes both the decarboxylative condensation of pimeloyl-[acyl-carrier protein] and L-alanine to produce 8-amino-7-oxononanoate (AON), [acyl-carrier protein], and carbon dioxide, and the transformation of pimelate into pimeloyl-CoA with concomitant hydrolysis of ATP to AMP. The protein is Biotin biosynthesis bifunctional protein BioWF (bioWF) of Corynebacterium kroppenstedtii (strain DSM 44385 / JCM 11950 / CIP 105744 / CCUG 35717).